Consider the following 372-residue polypeptide: Lysophosphatidic acid receptor 5 (372 aa).

Residues 1-30 (MFANSSANTTSTNSSVLQCPDYRDTHRLHM) are Extracellular-facing. N-linked (GlcNAc...) asparagine glycosylation is found at N4, N8, and N13. The helical transmembrane segment at 31–51 (VVYSLVLATGLPLNALALWVF) threads the bilayer. The Cytoplasmic segment spans residues 52–59 (LRVLRVHS). The helical transmembrane segment at 60 to 80 (VVSVYMCNLAASDLLFTLSLP) threads the bilayer. Topologically, residues 81–100 (LRLSYYAQHHWPFPGFLCQT) are extracellular. Residues C98 and C179 are joined by a disulfide bond. The helical transmembrane segment at 101–121 (SGAIFQMNMYGSCLFLMLINV) threads the bilayer. The Cytoplasmic segment spans residues 122 to 140 (DRYAAIVHPLRLRHLRRPR). A helical transmembrane segment spans residues 141–161 (VARRLCLGVWALILLFAVPAA). The Extracellular portion of the chain corresponds to 162–191 (RVHSPSHCTYKNITVRLCFESFSDELWKGR). N-linked (GlcNAc...) asparagine glycosylation is present at N173. A helical membrane pass occupies residues 192 to 212 (LLPLLLLAEILGFLLPLAAVV). At 213–243 (YSSGRVFWTLARPDATQSQRRRKTVRLLLAN) the chain is on the cytoplasmic side. Residues 244-264 (LIIFLLCFVPYNSTLAVYGLL) traverse the membrane as a helical segment. Topologically, residues 265-280 (RANLVKNSIQDRDQVR) are extracellular. The chain crosses the membrane as a helical span at residues 281–301 (GVLMIMVLLAGANCVLDPLVY). Residues 302–372 (YFSAEGFRNT…PDNCSQDSAL (71 aa)) lie on the Cytoplasmic side of the membrane.

The protein belongs to the G-protein coupled receptor 1 family.

The protein localises to the cell membrane. Receptor for lysophosphatidic acid (LPA), a mediator of diverse cellular activities. The polypeptide is Lysophosphatidic acid receptor 5 (Lpar5) (Mus musculus (Mouse)).